We begin with the raw amino-acid sequence, 394 residues long: Glycogen synthase kinase 1 (394 aa).

A Protein kinase domain is found at 35–318 (YTQCKIVGNG…AIDAMVHPFF (284 aa)). ATP is bound by residues 41–49 (VGNGSFGVV) and K64.

It belongs to the protein kinase superfamily. CMGC Ser/Thr protein kinase family. GSK-3 subfamily.

It localises to the cytoplasm. The catalysed reaction is L-seryl-[protein] + ATP = O-phospho-L-seryl-[protein] + ADP + H(+). In terms of biological role, protein kinase that acts downstream of the MPS1 MAPK cascade as a highly conservative signal modulator that dictates growth, conidiation and pathogenicity. Phosphorylates HAT1 at 'Ser-8' to block its translocation from the nucleus to the cytoplasm where HAT1 positively regulates appressorium development and pathogenicity. The polypeptide is Glycogen synthase kinase 1 (Pyricularia oryzae (Rice blast fungus)).